The sequence spans 398 residues: UPF0229 protein Ccel_0490 (398 aa).

Disordered regions lie at residues 1–22 and 68–104; these read MAIF…RRRH and KSKP…NSEG. 2 stretches are compositionally biased toward basic and acidic residues: residues 11–22 and 78–95; these read GKDRSAEDRRRH and GNEK…EGKG.

This sequence belongs to the UPF0229 family.

This Ruminiclostridium cellulolyticum (strain ATCC 35319 / DSM 5812 / JCM 6584 / H10) (Clostridium cellulolyticum) protein is UPF0229 protein Ccel_0490.